We begin with the raw amino-acid sequence, 320 residues long: Acetyl-coenzyme A carboxylase carboxyl transferase subunit alpha (320 aa).

The CoA carboxyltransferase C-terminal domain occupies 39–293; sequence ALDAKAAKLL…RGAIAAMLKE (255 aa).

This sequence belongs to the AccA family. As to quaternary structure, acetyl-CoA carboxylase is a heterohexamer composed of biotin carboxyl carrier protein (AccB), biotin carboxylase (AccC) and two subunits each of ACCase subunit alpha (AccA) and ACCase subunit beta (AccD).

It localises to the cytoplasm. The enzyme catalyses N(6)-carboxybiotinyl-L-lysyl-[protein] + acetyl-CoA = N(6)-biotinyl-L-lysyl-[protein] + malonyl-CoA. It functions in the pathway lipid metabolism; malonyl-CoA biosynthesis; malonyl-CoA from acetyl-CoA: step 1/1. Its function is as follows. Component of the acetyl coenzyme A carboxylase (ACC) complex. First, biotin carboxylase catalyzes the carboxylation of biotin on its carrier protein (BCCP) and then the CO(2) group is transferred by the carboxyltransferase to acetyl-CoA to form malonyl-CoA. The polypeptide is Acetyl-coenzyme A carboxylase carboxyl transferase subunit alpha (Ruegeria pomeroyi (strain ATCC 700808 / DSM 15171 / DSS-3) (Silicibacter pomeroyi)).